The chain runs to 235 residues: Sugar fermentation stimulation protein homolog (235 aa).

This sequence belongs to the SfsA family.

The protein is Sugar fermentation stimulation protein homolog of Ectopseudomonas mendocina (strain ymp) (Pseudomonas mendocina).